Reading from the N-terminus, the 360-residue chain is DNA polymerase IV (360 aa).

A UmuC domain is found at 8–189; the sequence is IIHVDMDCFF…LPLEKIPGVG (182 aa). Mg(2+)-binding residues include Asp-12 and Asp-107. Glu-108 is an active-site residue.

Belongs to the DNA polymerase type-Y family. As to quaternary structure, monomer. The cofactor is Mg(2+).

The protein resides in the cytoplasm. The catalysed reaction is DNA(n) + a 2'-deoxyribonucleoside 5'-triphosphate = DNA(n+1) + diphosphate. Functionally, poorly processive, error-prone DNA polymerase involved in untargeted mutagenesis. Copies undamaged DNA at stalled replication forks, which arise in vivo from mismatched or misaligned primer ends. These misaligned primers can be extended by PolIV. Exhibits no 3'-5' exonuclease (proofreading) activity. May be involved in translesional synthesis, in conjunction with the beta clamp from PolIII. This chain is DNA polymerase IV, found in Vibrio cholerae serotype O1 (strain ATCC 39315 / El Tor Inaba N16961).